We begin with the raw amino-acid sequence, 1550 residues long: MDRNREARRVPMAAAGNGLSRRRHRAGSFRDSPEEEGPVELPEAARLRDRGGSNKKDRDRERDRDRERERERDRERDRLNSRSKRRRGERLMMVHGNLDDGGDDSSEESVNDDEEYDDGGVGPPSSLKMLPPTSNNISAASFSSSLSNHHNGGSGNLHHHHHSHNNNHQRKNNFPPTKVFRSSPSPAPVSPLVSTWKAADEMIGVSVPRKARSACTKRPHESWASSTTGGGVFASGEQIHRQISSTSPANRVSPASILASPSPPAPTSPSSSSISVRKKLPSGTKQKPLPPKSSSSKLSSPVAVQDEIEIEIAEVLYGMMRMPSTSKQEAAGNDLTEAAKSTVEVKSRVSSPISNPQTLPQSSITLAANSSSSNVSAIAPKRKKPRHVKYEDDNSSRVTTIKSEAEAPSKSQVPFSNQLKSSGSGEGNSSVLDSIIPLTRESNASLDSEKKENNLSKDETILPKVESSSGFRSDGEGAKSSSPEKEKFEIDLMAPPPVRSSSERGGEMMECVAAEAKPKVTEVETEAKPLLKEDRSDPAIHDSQEKKRPRMVAEAEHHKFERNCELKLDLDKSDHVGLVNKHHVQKPPPQQQLSVPDKTAQASHLPLHMSMPGWPGGLPTMGYMAPTQGVVPTDTSSLSAAAMQPPPHLLFNQPRPKRCATHCYIARNIQSHQQFTKMNPFWPAAAGSAPMYGTKACNLSLMPPTELQGSVLGRSSNPVQDKNSQSTSKSSETAQRNQLMLQQALPPGAANSILHGPTFIFPLGQQPHAAATIAAASVRPPNSGITSSGPTATSTSMNGSASATPAGAPTMSFSYPAMPGNETQYLAILQNNGYPFPVPAHVGAQPAYRGAPGQPMPFFNGSFYSSQMIQPPHHQPQKQHQQQLTGQMLQSHAPNNQNGSASTGSSAAQKHLQNQQLRPPINHGNSQGFPTHKVQSQPLNFQQRQQPRENATQHSETVGEDSPSTADSRGSRSNVAYGQNYGMQMQPTNLGLMSSPAPGGGVVGSSSSHGEKKSQQQVSKAGVESFQSPGYAMTFATFNGANTAPTLNMSSIAQNHAMFHSMPEAARQGYQMMAAQAAQQKMNYGASLEDGKSGSIGGAATANNTPEEQRKSGGGAIGKTSGGNGGQSIAFSNKQDLADASVSAVTSGSIVDSSSRLLNLGSALPQSSGSLPTSHHQQLLQQQQQQHMQRSQSQQPYTTMYLQKQQRYATSVAASAARTKGPVVSNGSGFPDHNMTTSPAGTTKFANANSGFPQNLVQSSSNQVQSQQWKNNSPRTTNTTQAQSPSMLSPSTSVAAASSLRNIPHKQQSRPQQSQISFAANSKPMTSGSPMQQVQGGTNHQAPSPPMLVGSPSTSSVSKNASGSPRTTASASSAANKGGQASTTTHSASQPSKNLQPASAASSAGGRNNGPSVLGNPTTSSGSKSQQQQQLPKHGLQPQAQLFFSNPYMQAQHQHQQQQITISPSGGYYIQRHQQQSGSAPAVPVTGAVTATSDPAKAIAAASAANNMKGGGGMGKTQQHQLGPPGFTNVHAVSSAVQVKPVDQKQQAGE.

Disordered regions lie at residues M1–P191, V207–V304, T325–G505, Q708–R736, R779–P805, F859–V1023, A1086–A1130, A1163–P1196, A1213–A1296, and N1321–G1435. A compositionally biased stretch (basic and acidic residues) spans E43–N80. Residues D100–D118 are compositionally biased toward acidic residues. The span at S134–N151 shows a compositional bias: low complexity. Positions L157 to K171 are enriched in basic residues. Residues R241–N250 are compositionally biased toward polar residues. The span at K292–P301 shows a compositional bias: low complexity. The span at R348–L366 shows a compositional bias: polar residues. Low complexity predominate over residues A367–A379. Over residues S409–L432 the composition is skewed to polar residues. Composition is skewed to basic and acidic residues over residues D447–I461 and S473–I490. 3 stretches are compositionally biased toward polar residues: residues G713–R736, S783–A803, and L884–L992. Positions S1112–G1126 are enriched in gly residues. Over residues L1164–T1173 the composition is skewed to polar residues. Positions S1174–Q1195 are enriched in low complexity. The span at N1234–P1253 shows a compositional bias: polar residues. The segment covering Q1254–S1273 has biased composition (low complexity). 3 stretches are compositionally biased toward polar residues: residues P1274–A1296, N1321–A1342, and S1351–N1360. Residues A1361–S1382 show a composition bias toward low complexity. Composition is skewed to polar residues over residues T1383–P1397 and G1405–T1419. The span at S1420–G1435 shows a compositional bias: low complexity.

As to quaternary structure, interacts with MYC2.

Its subcellular location is the nucleus. Regulator of normal clock function. Acts in the mid to late night. Contributes to the amplitude of circadian clocks. May act on the transcriptional induction of LATE ELONGATED HYPOCOTYL (LHY). Inhibits MYC2 protein accumulation, acting as a negative factor in the JA-signaling pathway. In Arabidopsis thaliana (Mouse-ear cress), this protein is Protein TIME FOR COFFEE (TIC).